A 314-amino-acid polypeptide reads, in one-letter code: Methionyl-tRNA formyltransferase (314 aa).

112 to 115 lines the (6S)-5,6,7,8-tetrahydrofolate pocket; sequence SLLP.

This sequence belongs to the Fmt family.

It carries out the reaction L-methionyl-tRNA(fMet) + (6R)-10-formyltetrahydrofolate = N-formyl-L-methionyl-tRNA(fMet) + (6S)-5,6,7,8-tetrahydrofolate + H(+). Attaches a formyl group to the free amino group of methionyl-tRNA(fMet). The formyl group appears to play a dual role in the initiator identity of N-formylmethionyl-tRNA by promoting its recognition by IF2 and preventing the misappropriation of this tRNA by the elongation apparatus. The protein is Methionyl-tRNA formyltransferase of Legionella pneumophila (strain Corby).